Here is a 720-residue protein sequence, read N- to C-terminus: Polyribonucleotide nucleotidyltransferase (720 aa).

Residues Asp484 and Asp490 each coordinate Mg(2+). Residues Pro551 to Ile610 form the KH domain. The S1 motif domain occupies Gly620–Arg688. Positions Pro697–Ser720 are disordered.

Belongs to the polyribonucleotide nucleotidyltransferase family. It depends on Mg(2+) as a cofactor.

The protein localises to the cytoplasm. The catalysed reaction is RNA(n+1) + phosphate = RNA(n) + a ribonucleoside 5'-diphosphate. Functionally, involved in mRNA degradation. Catalyzes the phosphorolysis of single-stranded polyribonucleotides processively in the 3'- to 5'-direction. The chain is Polyribonucleotide nucleotidyltransferase from Dehalococcoides mccartyi (strain ATCC BAA-2266 / KCTC 15142 / 195) (Dehalococcoides ethenogenes (strain 195)).